A 199-amino-acid polypeptide reads, in one-letter code: NAD(P)H dehydrogenase (quinone) (199 aa).

The 187-residue stretch at 4 to 190 folds into the Flavodoxin-like domain; the sequence is ILVLYYSSWG…EGARFQGKRL (187 aa). FMN-binding positions include 10–15 and 78–80; these read SSWGHM and TRY. W12 provides a ligand contact to NAD(+). W98 contributes to the substrate binding site. Residues 113–119 and H134 each bind FMN; that span reads STATQHG. The interval 155-175 is disordered; sequence VRGGAPYGMTTTSDTDGSRMP.

It belongs to the WrbA family. It depends on FMN as a cofactor.

The enzyme catalyses a quinone + NADH + H(+) = a quinol + NAD(+). It catalyses the reaction a quinone + NADPH + H(+) = a quinol + NADP(+). This Chelativorans sp. (strain BNC1) protein is NAD(P)H dehydrogenase (quinone).